A 207-amino-acid chain; its full sequence is MAITIKATKREGKGTSASRRLRRAGNVPGVVYGGDKEAVSLEFNHKELFLEFRHETFHASILNLEVDGQKEQVVLRDYQLHPVRNTIQHIDFQRVSASEKVHVKVPLHFINADIAPGVKLAGGIVTHILTEADVSCLPKDLPEFIEVDLSNLEAGHSIHLSQIKLPNGVEFVQLAHDNDAAVASISKPRGGAGAEGEADAEGEAAAE.

A disordered region spans residues 186–207 (SKPRGGAGAEGEADAEGEAAAE). Residues 196 to 207 (GEADAEGEAAAE) are compositionally biased toward acidic residues.

It belongs to the bacterial ribosomal protein bL25 family. CTC subfamily. Part of the 50S ribosomal subunit; part of the 5S rRNA/L5/L18/L25 subcomplex. Contacts the 5S rRNA. Binds to the 5S rRNA independently of L5 and L18.

This is one of the proteins that binds to the 5S RNA in the ribosome where it forms part of the central protuberance. The chain is Large ribosomal subunit protein bL25 from Methylobacillus flagellatus (strain ATCC 51484 / DSM 6875 / VKM B-1610 / KT).